The primary structure comprises 164 residues: F-box protein At4g05010 (164 aa).

The interval 38 to 57 is disordered; it reads SKRAPENDSPPVKRPSHETT. The region spanning 61–109 is the F-box domain; the sequence is RSLLETLHQDILIRVLCHVDHEDLATLKRVSKTIRKAVIEAKKSHFDYS.

This is F-box protein At4g05010 from Arabidopsis thaliana (Mouse-ear cress).